A 444-amino-acid polypeptide reads, in one-letter code: MFALGIYLWETIVFFSLAASQQAAARKAASPMPPSEFLDKLMGKVSGYDARIRPNFKGPPVNVTCNIFINSFGSIAETTMDYRVNIFLRQQWNDPRLAYSEYPDDSLDLDPSMLDSIWKPDLFFANEKGANFHEVTTDNKLLRISKNGNVLYSIRITLVLACPMDLKNFPMDVQTCIMQLESFGYTMNDLIFEWDEKGAVQVADGLTLPQFILKEEKDLRYCTKHYNTGKFTCIEARFHLERQMGYYLIQMYIPSLLIVILSWVSFWINMDAAPARVGLGITTVLTMTTQSSGSRASLPKVSYVKAIDIWMAVCLLFVFSALLEYAAVNFIARQHKELLRFQRRRRHLKEDEAGDGRFSFAAYGMGPACLQAKDGMAIKGNNNNAPTSTNPPEKTVEEMRKLFISRAKRIDTVSRVAFPLVFLIFNIFYWITYKIIRSEDIHKQ.

Positions 1–24 are cleaved as a signal peptide; it reads MFALGIYLWETIVFFSLAASQQAA. Topologically, residues 25 to 246 are extracellular; the sequence is ARKAASPMPP…RFHLERQMGY (222 aa). Asparagine 62 carries an N-linked (GlcNAc...) asparagine glycan. Residues arginine 89 and serine 153 each coordinate glycine. The cysteines at positions 162 and 176 are disulfide-linked. Positions 216 and 218 each coordinate Zn(2+). A disulfide bond links cysteine 222 and cysteine 233. Position 226–231 (226–231) interacts with strychnine; that stretch reads YNTGKF. Residue threonine 228 participates in glycine binding. Position 239 (histidine 239) interacts with Zn(2+). Residues 247-268 form a helical membrane-spanning segment; the sequence is YLIQMYIPSLLIVILSWVSFWI. Over 269–273 the chain is Cytoplasmic; it reads NMDAA. The chain crosses the membrane as a helical span at residues 274–294; that stretch reads PARVGLGITTVLTMTTQSSGS. The Extracellular portion of the chain corresponds to 295–305; that stretch reads RASLPKVSYVK. Residues 306–326 form a helical membrane-spanning segment; sequence AIDIWMAVCLLFVFSALLEYA. Residues 327–412 lie on the Cytoplasmic side of the membrane; sequence AVNFIARQHK…FISRAKRIDT (86 aa). The helical transmembrane segment at 413–433 threads the bilayer; sequence VSRVAFPLVFLIFNIFYWITY. The Extracellular portion of the chain corresponds to 434–444; it reads KIIRSEDIHKQ.

It belongs to the ligand-gated ion channel (TC 1.A.9) family. Glycine receptor (TC 1.A.9.3) subfamily. GLRA1 sub-subfamily. As to quaternary structure, homopentamer (in vitro). Heteropentamer composed of glra1 and glrb. Both homopentamers and heteropentamers form functional ion channels. Interacts with glrb. As to expression, expressed in brain.

It localises to the postsynaptic cell membrane. Its subcellular location is the synapse. The protein localises to the perikaryon. The protein resides in the cell projection. It is found in the dendrite. It localises to the cell membrane. The enzyme catalyses chloride(in) = chloride(out). With respect to regulation, activated by glycine and taurine. Inhibited by strychnine. Allosterically activated by ivermectin. Inhibited by picrotoxinin. Strychnine binding locks the channel in a closed conformation and prevents channel opening in response to extracellular glycine. Can also be activated by GABA and inhibited by bicuculline, but this requires heterologous expression in human cells. Its function is as follows. Subunit of heteromeric glycine-gated chloride channels. Plays an important role in the down-regulation of neuronal excitability. Contributes to the generation of inhibitory postsynaptic currents. Channel activity is potentiated by ethanol. This is Glycine receptor subunit alphaZ1 (glra1) from Danio rerio (Zebrafish).